Consider the following 397-residue polypeptide: Elongation factor Tu (397 aa).

The tr-type G domain occupies 10 to 207; sequence KPHVNIGTIG…AVDESIPEPV (198 aa). The segment at 19–26 is G1; that stretch reads GHVDHGKT. 19–26 provides a ligand contact to GTP; it reads GHVDHGKT. Position 26 (Thr26) interacts with Mg(2+). The segment at 63–67 is G2; that stretch reads GITIN. Residues 84–87 form a G3 region; that stretch reads DAPG. Residues 84–88 and 139–142 contribute to the GTP site; these read DAPGH and NKSD. The tract at residues 139-142 is G4; the sequence is NKSD. The G5 stretch occupies residues 177-179; it reads SGL.

The protein belongs to the TRAFAC class translation factor GTPase superfamily. Classic translation factor GTPase family. EF-Tu/EF-1A subfamily. In terms of assembly, monomer.

The protein localises to the cytoplasm. It carries out the reaction GTP + H2O = GDP + phosphate + H(+). GTP hydrolase that promotes the GTP-dependent binding of aminoacyl-tRNA to the A-site of ribosomes during protein biosynthesis. This is Elongation factor Tu from Clavibacter sepedonicus (Clavibacter michiganensis subsp. sepedonicus).